We begin with the raw amino-acid sequence, 385 residues long: POU domain, class 3, transcription factor 2-B (385 aa).

3 disordered regions span residues Leu-106–Gly-136, Asn-149–Ser-209, and Glu-351–Gln-385. Polar residues predominate over residues Ser-122–Gly-136. Over residues Leu-165–His-178 the composition is skewed to basic and acidic residues. A compositionally biased stretch (low complexity) spans Gln-179 to Gly-196. Residues Glu-204–Asp-278 form the POU-specific domain. A DNA-binding region (homeobox) is located at residues Lys-296 to Thr-355.

Belongs to the POU transcription factor family. Class-3 subfamily. Expressed in the developing brain and spinal cord. Also found in a restricted region of the auditory vesicle during development. In the adult, expression is restricted to the brain.

Its subcellular location is the nucleus. In terms of biological role, transcription factor that may be implicated in patterning of the central nervous system during early development. In Xenopus laevis (African clawed frog), this protein is POU domain, class 3, transcription factor 2-B (pou3f2-b).